A 24-amino-acid polypeptide reads, in one-letter code: Protein YahV (24 aa).

The helical transmembrane segment at 4–24 (ILLNVLNIVFIGIAIILVIIC) threads the bilayer.

It localises to the cell inner membrane. The sequence is that of Protein YahV from Escherichia coli (strain K12).